Consider the following 447-residue polypeptide: Probable rhamnogalacturonase C (447 aa).

Positions methionine 1–alanine 19 are cleaved as a signal peptide. Asparagine 37 and asparagine 65 each carry an N-linked (GlcNAc...) asparagine glycan. A disulfide bridge connects residues cysteine 40 and cysteine 66. Aspartate 217 functions as the Proton donor in the catalytic mechanism. An intrachain disulfide couples cysteine 219 to cysteine 236. N-linked (GlcNAc...) asparagine glycosylation is found at asparagine 237 and asparagine 252. Residue histidine 291 is part of the active site. Asparagine 316 is a glycosylation site (N-linked (GlcNAc...) asparagine). 2 disulfides stabilise this stretch: cysteine 338-cysteine 344 and cysteine 366-cysteine 375.

It belongs to the glycosyl hydrolase 28 family.

Its subcellular location is the secreted. Its function is as follows. Pectinolytic enzymes consist of four classes of enzymes: pectine lyase, polygalacturonase, pectin methylesterase and rhamnogalacturonase. Hydrolyzes alpha-D-galacturonopyranosyl-(1,2)-alpha-L-rhamnopyranosyl linkages in the backbone of the hairy regions of pectins. This chain is Probable rhamnogalacturonase C (rhgC), found in Aspergillus flavus (strain ATCC 200026 / FGSC A1120 / IAM 13836 / NRRL 3357 / JCM 12722 / SRRC 167).